Reading from the N-terminus, the 645-residue chain is 1,4-alpha-glucan branching enzyme GlgB (645 aa).

The active-site Nucleophile is the D309. The active-site Proton donor is E352. The interval 619 to 645 (VKTRKGSKKQDGSKTKVRSNVTSRGKR) is disordered. Residues 636–645 (RSNVTSRGKR) are compositionally biased toward polar residues.

The protein belongs to the glycosyl hydrolase 13 family. GlgB subfamily. In terms of assembly, monomer.

The catalysed reaction is Transfers a segment of a (1-&gt;4)-alpha-D-glucan chain to a primary hydroxy group in a similar glucan chain.. The protein operates within glycan biosynthesis; glycogen biosynthesis. Functionally, catalyzes the formation of the alpha-1,6-glucosidic linkages in glycogen by scission of a 1,4-alpha-linked oligosaccharide from growing alpha-1,4-glucan chains and the subsequent attachment of the oligosaccharide to the alpha-1,6 position. This Bacillus cereus (strain AH820) protein is 1,4-alpha-glucan branching enzyme GlgB.